A 1450-amino-acid chain; its full sequence is Sister chromatid cohesion protein PDS5 homolog (1450 aa).

Disordered stretches follow at residues 1–145 (MATR…KETK), 680–707 (VGGS…QQQQ), and 1340–1450 (LPPL…EVEN). Acidic residues predominate over residues 45-59 (DDGELDSDIDEEDES). Residues 77–138 (KTQQQPQKSI…TSSSSQQSTQ (62 aa)) show a composition bias toward low complexity. Residues 650–716 (KQLFKKYLEE…QLQQPENDIE (67 aa)) adopt a coiled-coil conformation. Residues 682–691 (GSTTPTSKKS) are compositionally biased toward polar residues. Low complexity-rich tracts occupy residues 692-707 (QPPQ…QQQQ) and 1350-1363 (NNNN…STNN). Basic and acidic residues predominate over residues 1369-1378 (DENNNNKNDN). Positions 1387–1401 (NSTTAVPQKSIISKP) are enriched in low complexity. A compositionally biased stretch (basic residues) spans 1402-1427 (PAKKVSKKAAAKQKSPKKKTNKKKKQ). The span at 1430-1450 (SEEEVSSSEEEDESQDEEVEN) shows a compositional bias: acidic residues.

The protein belongs to the PDS5 family.

It localises to the nucleus. May regulate sister chromatid cohesion during mitosis and couple it to DNA replication. The chain is Sister chromatid cohesion protein PDS5 homolog from Dictyostelium discoideum (Social amoeba).